A 462-amino-acid polypeptide reads, in one-letter code: Malonyl-coenzyme:anthocyanin 5-O-glucoside-6'''-O-malonyltransferase (462 aa).

Active-site proton acceptor residues include His167 and Asp390.

The protein belongs to the plant acyltransferase family. In terms of tissue distribution, detected in petals and sepals, and at lower levels in bracts and red stems.

The enzyme catalyses pelargonidin 3-O-(6-O-[(E)-caffeoyl]-beta-D-glucoside) 5-O-beta-D-glucoside + malonyl-CoA = 4'''-demalonylsalvianin + CoA. The protein operates within pigment biosynthesis; anthocyanin biosynthesis. Completely inhibited by 10 mM p-coumaric acid, this inhibition is rapid, reversible and non-competitive. Completely inhibited by 0.1 mM Cu(2+), 0.1 mM Hg(2+) and 10 mM caffeic acid. Partially inhibited by 5 mM N-ethylmaleimide, 1 mM diethylpyrocarbonate and 1 mM acetyl-CoA. Functionally, catalyzes the transfer of a malonyl group from malonyl-CoA to the 6'''-hydroxyl group of the 5-glucosyl moiety of anthocyanins. Active towards bisdemalonylsalvianin (pelargonidin 3-O-(6-caffeoyl-beta-D-glucoside) 5-O-beta-D-glucoside) and shisonin, but not towards nodemalonylsalvianin, salvianin, pelargonidin 3,5-diglucoside and delphinidin 3,5-diglucoside. This Salvia splendens (Scarlet sage) protein is Malonyl-coenzyme:anthocyanin 5-O-glucoside-6'''-O-malonyltransferase.